Here is a 172-residue protein sequence, read N- to C-terminus: RNA pyrophosphohydrolase (172 aa).

Residues 6–149 (GYRLNVGIVI…KRDVYRRAMK (144 aa)) form the Nudix hydrolase domain. The Nudix box motif lies at 38–59 (GGIDEGETPEQAMYRELYEEVG).

It belongs to the Nudix hydrolase family. RppH subfamily. Requires a divalent metal cation as cofactor.

Its function is as follows. Accelerates the degradation of transcripts by removing pyrophosphate from the 5'-end of triphosphorylated RNA, leading to a more labile monophosphorylated state that can stimulate subsequent ribonuclease cleavage. This is RNA pyrophosphohydrolase from Vibrio atlanticus (strain LGP32) (Vibrio splendidus (strain Mel32)).